The chain runs to 570 residues: Double-stranded RNA-binding protein Staufen homolog 2 (570 aa).

The DRBM 1 domain maps to 8–75 (TAMCLVNELA…ANKALTESTL (68 aa)). Disordered regions lie at residues 71–94 (TEST…PGSI) and 181–203 (NEPI…DDKD). Residues 83 to 94 (PKSNVNNNPGSI) show a composition bias toward polar residues. A DRBM 2 domain is found at 95–181 (TPTVELNGLA…AMKALQALQN (87 aa)). At serine 188 the chain carries Phosphoserine. A compositionally biased stretch (basic and acidic residues) spans 194–203 (SGKDVDDDKD). DRBM domains lie at 207 to 274 (SEIS…ELKK) and 307 to 375 (NPIS…QLGY). Short sequence motifs (nuclear localization signal) lie at residues 273–291 (KKLP…FKKR) and 373–412 (LGYK…PKGI). The tract at residues 381-570 (LQDQLEKTGE…QDCKKSNSAV (190 aa)) is required for dendritic transport. Positions 387–409 (KTGENKGWSGPKPGFPEPTNNTP) are disordered. Position 395 is a phosphoserine (serine 395). Phosphothreonine is present on threonine 405. Phosphoserine is present on residues serine 416, serine 426, serine 440, serine 455, and serine 492. Residues 528–570 (DGAMNIEKGSLEKQAKHLREKADNNQAPPGSIAQDCKKSNSAV) are disordered. Residues 536–550 (GSLEKQAKHLREKAD) show a composition bias toward basic and acidic residues.

Interacts with the exportin XPO5. This requires RNA and RAN bound to GTP. Interacts with microtubules. Isoform 2 and isoform 3 may also interact with ribosomes, and this association is independent of translation. Identified in a mRNP complex, at least composed of DHX9, DDX3X, ELAVL1, HNRNPU, IGF2BP1, ILF3, PABPC1, PCBP2, PTBP2, STAU1, STAU2, SYNCRIP and YBX1. Interacts with TRIM71 (via NHL repeats) in an RNA-dependent manner.

It is found in the cytoplasm. The protein resides in the nucleus. The protein localises to the nucleolus. It localises to the endoplasmic reticulum. RNA-binding protein required for the microtubule-dependent transport of neuronal RNA from the cell body to the dendrite. As protein synthesis occurs within the dendrite, the localization of specific mRNAs to dendrites may be a prerequisite for neurite outgrowth and plasticity at sites distant from the cell body. This chain is Double-stranded RNA-binding protein Staufen homolog 2 (STAU2), found in Homo sapiens (Human).